A 217-amino-acid polypeptide reads, in one-letter code: Probable transaldolase (217 aa).

The active-site Schiff-base intermediate with substrate is the K83.

It belongs to the transaldolase family. Type 3B subfamily.

It is found in the cytoplasm. It catalyses the reaction D-sedoheptulose 7-phosphate + D-glyceraldehyde 3-phosphate = D-erythrose 4-phosphate + beta-D-fructose 6-phosphate. Its pathway is carbohydrate degradation; pentose phosphate pathway; D-glyceraldehyde 3-phosphate and beta-D-fructose 6-phosphate from D-ribose 5-phosphate and D-xylulose 5-phosphate (non-oxidative stage): step 2/3. In terms of biological role, transaldolase is important for the balance of metabolites in the pentose-phosphate pathway. In Methanocaldococcus jannaschii (strain ATCC 43067 / DSM 2661 / JAL-1 / JCM 10045 / NBRC 100440) (Methanococcus jannaschii), this protein is Probable transaldolase (tal).